A 322-amino-acid chain; its full sequence is Undecaprenyl-phosphate 4-deoxy-4-formamido-L-arabinose transferase (322 aa).

Over 1–235 the chain is Cytoplasmic; that stretch reads MFEIHPVKKV…TCLTTTPLRM (235 aa). A helical transmembrane segment spans residues 236–256; that stretch reads LSLLGSIIAIGGFSIAVLLVI. The Periplasmic portion of the chain corresponds to 257–269; sequence LRLTFGPQWAAEG. The chain crosses the membrane as a helical span at residues 270–290; the sequence is VFMLFAVLFTFIGAQFIGMGL. Residues 291 to 322 lie on the Cytoplasmic side of the membrane; that stretch reads LGEYIGRIYTDVRARPRYFVQQVIRPSSKENE.

It belongs to the glycosyltransferase 2 family.

The protein localises to the cell inner membrane. It catalyses the reaction UDP-4-deoxy-4-formamido-beta-L-arabinose + di-trans,octa-cis-undecaprenyl phosphate = 4-deoxy-4-formamido-alpha-L-arabinopyranosyl di-trans,octa-cis-undecaprenyl phosphate + UDP. It participates in glycolipid biosynthesis; 4-amino-4-deoxy-alpha-L-arabinose undecaprenyl phosphate biosynthesis; 4-amino-4-deoxy-alpha-L-arabinose undecaprenyl phosphate from UDP-4-deoxy-4-formamido-beta-L-arabinose and undecaprenyl phosphate: step 1/2. Its pathway is bacterial outer membrane biogenesis; lipopolysaccharide biosynthesis. In terms of biological role, catalyzes the transfer of 4-deoxy-4-formamido-L-arabinose from UDP to undecaprenyl phosphate. The modified arabinose is attached to lipid A and is required for resistance to polymyxin and cationic antimicrobial peptides. The protein is Undecaprenyl-phosphate 4-deoxy-4-formamido-L-arabinose transferase of Escherichia coli O45:K1 (strain S88 / ExPEC).